An 89-amino-acid polypeptide reads, in one-letter code: Large ribosomal subunit protein bL27 (89 aa).

Residues 1–21 form a disordered region; the sequence is MAHKKAGGSSRNGRDTEGRRL.

Belongs to the bacterial ribosomal protein bL27 family.

This Granulibacter bethesdensis (strain ATCC BAA-1260 / CGDNIH1) protein is Large ribosomal subunit protein bL27.